The following is a 296-amino-acid chain: 4-hydroxybenzoate octaprenyltransferase (296 aa).

8 helical membrane passes run 28 to 48 (PIGI…AGKG), 52 to 72 (LINI…GCVI), 102 to 122 (ALVF…LTNA), 146 to 166 (YYPQ…AFTA), 169 to 189 (GDLP…TVGY), 219 to 239 (VIIL…GARF), 241 to 261 (LGGW…WEFW), and 275 to 295 (FLHN…DYAF).

Belongs to the UbiA prenyltransferase family. Mg(2+) is required as a cofactor.

The protein resides in the cell inner membrane. It catalyses the reaction all-trans-octaprenyl diphosphate + 4-hydroxybenzoate = 4-hydroxy-3-(all-trans-octaprenyl)benzoate + diphosphate. It participates in cofactor biosynthesis; ubiquinone biosynthesis. Its function is as follows. Catalyzes the prenylation of para-hydroxybenzoate (PHB) with an all-trans polyprenyl group. Mediates the second step in the final reaction sequence of ubiquinone-8 (UQ-8) biosynthesis, which is the condensation of the polyisoprenoid side chain with PHB, generating the first membrane-bound Q intermediate 3-octaprenyl-4-hydroxybenzoate. This Pseudomonas fluorescens (strain SBW25) protein is 4-hydroxybenzoate octaprenyltransferase.